A 151-amino-acid chain; its full sequence is Centrin-A (151 aa).

EF-hand domains lie at 80 to 115 (DVYASFEQAFSLFDRDGSGYITFDDLKTVAINLGEA) and 116 to 151 (RSDSKLYNMIKRADLNGDKKISKIEFIQLLYWKKIY). The Ca(2+) site is built by D93, D95, S97, Y99, D104, D129, N131, D133, K135, and E140.

This sequence belongs to the centrin family.

The protein resides in the cytoplasm. It is found in the cytoskeleton. Its subcellular location is the microtubule organizing center. The protein localises to the centrosome. It localises to the nucleus. Plays a fundamental role in microtubule-organizing center structure and function. The chain is Centrin-A (cenA) from Dictyostelium discoideum (Social amoeba).